A 103-amino-acid chain; its full sequence is c-Myc-binding protein (103 aa).

It belongs to the AMY1 family. In terms of assembly, binds via its C-terminal region to the N-terminal region of MYC. Associates with AKAP1/S-AKAP84. Interacts with MYCBPAP. Interacts with CFAP91.

The protein resides in the cytoplasm. Its subcellular location is the nucleus. Its function is as follows. May control the transcriptional activity of MYC. Stimulates the activation of E box-dependent transcription by MYC. This chain is c-Myc-binding protein (MYCBP), found in Pongo abelii (Sumatran orangutan).